A 92-amino-acid polypeptide reads, in one-letter code: Alpha-conotoxin-like Mi20.2 (92 aa).

The N-terminal stretch at M1–E24 is a signal peptide. Positions Q25–R45 are excised as a propeptide. 4-carboxyglutamate is present on E49. 4-hydroxyproline is present on P55. Disulfide bonds link C63–C72, C68–C80, C73–C90, and C78–C92.

The protein belongs to the conotoxin D superfamily. In terms of assembly, hetero-, homo- or pseudo-homodimer (identical sequence, different post-translational modifications). In terms of tissue distribution, expressed by the venom duct.

It localises to the secreted. Alpha-conotoxins act on postsynaptic membranes, they bind to the nicotinic acetylcholine receptors (nAChR) and thus inhibit them. Through its two C-terminal domains, this homodimeric protein would bind to two nAChR allosteric sites, located outside the nAChR C-loop of the principal binding face and at the adjacent binding interface in a clockwise direction. This toxin specifically blocks mammalian neuronal nAChR of the alpha-7/CHRNA7, alpha-3-beta-2/CHRNA3-CHRNB2 and alpha-4-beta-2/CHRNA4-CHRNB2 subtypes. This Conus miles (Soldier cone) protein is Alpha-conotoxin-like Mi20.2.